The chain runs to 359 residues: MKRWILFLILSVFLIGCAKTKIVDDIDLVQVAAYDTEAEGKLKGTFAISAYKGGGEGETKIYSASGQTGREVLARASEKSSGPLELGQLRVIIFNEKIIEKGMQEILETLNRNPSVGNAIYLAITNVKGESLLKGNYSKEKEIASYLSSLLEQNMNNGTQPKTNFFMFLNQLDDDARDSYLPMISKKGNVLELNGIALFKRCKMVDKVNPKDLFVFKLLTDNFKQGTYQFKLPGSSNTYATIENIKARTKYKMEGNSKHPFVNAHIQVKAEIQEFTKTKNLDNPKEIKKLEKIMGKEIEKKATTLIKRFIKKDTDPIGLRKLGRTHVRKWNSQEWEESYKHLRFRVTADVKVTQSGVTE.

An N-terminal signal peptide occupies residues 1 to 16; sequence MKRWILFLILSVFLIG. Residue cysteine 17 is the site of N-palmitoyl cysteine attachment. Cysteine 17 carries S-diacylglycerol cysteine lipidation.

This sequence belongs to the GerABKC lipoprotein family.

Its subcellular location is the membrane. Required for the germination response to inosine. Has no role in L-alanine germination. This Bacillus cereus protein is Spore germination protein GerQC (gerQC).